A 447-amino-acid polypeptide reads, in one-letter code: Monocarboxylate transporter 11 (447 aa).

The Cytoplasmic portion of the chain corresponds to 1–11 (MTPKPAGPPDG). The next 12 helical transmembrane spans lie at 12 to 32 (GWGW…YGLL), 54 to 74 (AWVS…GSAL), 80 to 100 (ARPV…FSAF), 107 to 127 (LYLG…APAL), 139 to 159 (VLAV…LAPA), 162 to 182 (FLLD…VTLH), 219 to 239 (AFSV…VPYV), 249 to 269 (GMGG…DACA), 288 to 308 (LVVF…VPTV), 330 to 350 (GSYA…GGVV), 354 to 374 (GLVM…SGFL), and 383 to 403 (ASFL…MGLP). Over 404 to 447 (RALPSCRPASPPATPPPERGELLPVPQVSLLSAGGTGSIRDTTC) the chain is Cytoplasmic.

This sequence belongs to the major facilitator superfamily. Monocarboxylate porter (TC 2.A.1.13) family. As to quaternary structure, interacts with isoform 2 of BSG.

It is found in the endoplasmic reticulum membrane. The protein localises to the cell membrane. It catalyses the reaction pyruvate(out) + H(+)(out) = pyruvate(in) + H(+)(in). Functionally, proton-linked monocarboxylate transporter. It catalyzes the transport of pyruvate across the plasma membrane. Probably involved in hepatic lipid metabolism: overexpression results in an increase of triacylglycerol(TAG) levels, small increases in intracellular diacylglycerols and decreases in lysophosphatidylcholine, cholesterol ester and sphingomyelin lipids. This Mus musculus (Mouse) protein is Monocarboxylate transporter 11 (Slc16a11).